A 101-amino-acid chain; its full sequence is Small ribosomal subunit protein uS14 (101 aa).

The protein belongs to the universal ribosomal protein uS14 family. Part of the 30S ribosomal subunit. Contacts proteins S3 and S10.

In terms of biological role, binds 16S rRNA, required for the assembly of 30S particles and may also be responsible for determining the conformation of the 16S rRNA at the A site. The chain is Small ribosomal subunit protein uS14 from Polaromonas sp. (strain JS666 / ATCC BAA-500).